The primary structure comprises 317 residues: Olfactory receptor 2T27 (317 aa).

The Extracellular segment spans residues Met-1–Arg-22. Asn-5 is a glycosylation site (N-linked (GlcNAc...) asparagine). A helical transmembrane segment spans residues Phe-23–Val-43. Topologically, residues Val-44–Tyr-60 are cytoplasmic. The chain crosses the membrane as a helical span at residues Phe-61–Val-83. Topologically, residues Asp-84 to Cys-97 are extracellular. The cysteines at positions 97 and 189 are disulfide-linked. The helical transmembrane segment at Thr-98–Met-118 threads the bilayer. Over Ser-119 to Lys-139 the chain is Cytoplasmic. The helical transmembrane segment at Ile-140–Thr-160 threads the bilayer. Topologically, residues Pro-161–Thr-197 are extracellular. Residues Ala-198–Tyr-218 form a helical membrane-spanning segment. Over Thr-219–His-244 the chain is Cytoplasmic. The chain crosses the membrane as a helical span at residues Met-245–Tyr-265. Residues His-266–Asp-271 lie on the Extracellular side of the membrane. The helical transmembrane segment at Lys-272–Leu-292 threads the bilayer. The Cytoplasmic portion of the chain corresponds to Arg-293–Phe-317.

This sequence belongs to the G-protein coupled receptor 1 family.

The protein localises to the cell membrane. Odorant receptor. The chain is Olfactory receptor 2T27 (OR2T27) from Homo sapiens (Human).